Here is a 453-residue protein sequence, read N- to C-terminus: tRNA-2-methylthio-N(6)-dimethylallyladenosine synthase (453 aa).

The 121-residue stretch at 11–131 (KSFHVKSFGC…LPQLVADAAE (121 aa)) folds into the MTTase N-terminal domain. [4Fe-4S] cluster-binding residues include Cys20, Cys56, Cys94, Cys167, Cys171, and Cys174. The region spanning 153 to 385 (RRQGPTAFLT…QALLNEQQHR (233 aa)) is the Radical SAM core domain. A TRAM domain is found at 388 to 449 (LATVGKRCEV…PNSLSGALVE (62 aa)).

It belongs to the methylthiotransferase family. MiaB subfamily. Monomer. It depends on [4Fe-4S] cluster as a cofactor.

The protein localises to the cytoplasm. The catalysed reaction is N(6)-dimethylallyladenosine(37) in tRNA + (sulfur carrier)-SH + AH2 + 2 S-adenosyl-L-methionine = 2-methylsulfanyl-N(6)-dimethylallyladenosine(37) in tRNA + (sulfur carrier)-H + 5'-deoxyadenosine + L-methionine + A + S-adenosyl-L-homocysteine + 2 H(+). Catalyzes the methylthiolation of N6-(dimethylallyl)adenosine (i(6)A), leading to the formation of 2-methylthio-N6-(dimethylallyl)adenosine (ms(2)i(6)A) at position 37 in tRNAs that read codons beginning with uridine. In Rhizorhabdus wittichii (strain DSM 6014 / CCUG 31198 / JCM 15750 / NBRC 105917 / EY 4224 / RW1) (Sphingomonas wittichii), this protein is tRNA-2-methylthio-N(6)-dimethylallyladenosine synthase.